Here is a 723-residue protein sequence, read N- to C-terminus: Catalase-peroxidase (723 aa).

The segment at residues 98 to 226 is a cross-link (tryptophyl-tyrosyl-methioninium (Trp-Tyr) (with M-252)); sequence WHSAGSYRVG…LAAVMMGLIY (129 aa). The active-site Proton acceptor is histidine 99. Residues 226-252 constitute a cross-link (tryptophyl-tyrosyl-methioninium (Tyr-Met) (with W-98)); sequence YVNPEGVDGNPDPLKTAKDMRVTFARM. Histidine 267 lines the heme b pocket.

The protein belongs to the peroxidase family. Peroxidase/catalase subfamily. In terms of assembly, homodimer or homotetramer. Heme b serves as cofactor. Post-translationally, formation of the three residue Trp-Tyr-Met cross-link is important for the catalase, but not the peroxidase activity of the enzyme.

It carries out the reaction H2O2 + AH2 = A + 2 H2O. It catalyses the reaction 2 H2O2 = O2 + 2 H2O. In terms of biological role, bifunctional enzyme with both catalase and broad-spectrum peroxidase activity. The chain is Catalase-peroxidase from Vibrio vulnificus (strain CMCP6).